A 575-amino-acid polypeptide reads, in one-letter code: uncharacterized protein (575 aa).

The HTH marR-type domain occupies 1–120 (MKLIEHYVAL…YNMWLSEVFG (120 aa)). A DNA-binding region (H-T-H motif) is located at residues 26–49 (LTEIADCLFCTERNAKLILHKLEN). The solute-binding region stretch occupies residues 176-490 (EPKPHLVHGW…FGFLHLLLSE (315 aa)).

This sequence in the C-terminal section; belongs to the bacterial solute-binding protein 5 family.

This is an uncharacterized protein from Bacillus subtilis (strain 168).